We begin with the raw amino-acid sequence, 255 residues long: Leucyl/phenylalanyl-tRNA--protein transferase (255 aa).

Belongs to the L/F-transferase family.

It localises to the cytoplasm. It carries out the reaction N-terminal L-lysyl-[protein] + L-leucyl-tRNA(Leu) = N-terminal L-leucyl-L-lysyl-[protein] + tRNA(Leu) + H(+). The enzyme catalyses N-terminal L-arginyl-[protein] + L-leucyl-tRNA(Leu) = N-terminal L-leucyl-L-arginyl-[protein] + tRNA(Leu) + H(+). It catalyses the reaction L-phenylalanyl-tRNA(Phe) + an N-terminal L-alpha-aminoacyl-[protein] = an N-terminal L-phenylalanyl-L-alpha-aminoacyl-[protein] + tRNA(Phe). Functionally, functions in the N-end rule pathway of protein degradation where it conjugates Leu, Phe and, less efficiently, Met from aminoacyl-tRNAs to the N-termini of proteins containing an N-terminal arginine or lysine. This Polaromonas sp. (strain JS666 / ATCC BAA-500) protein is Leucyl/phenylalanyl-tRNA--protein transferase.